Here is a 268-residue protein sequence, read N- to C-terminus: Hydroxyethylthiazole kinase (268 aa).

Met-46 serves as a coordination point for substrate. Arg-122 and Thr-168 together coordinate ATP. A substrate-binding site is contributed by Gly-195.

This sequence belongs to the Thz kinase family. Mg(2+) is required as a cofactor.

The enzyme catalyses 5-(2-hydroxyethyl)-4-methylthiazole + ATP = 4-methyl-5-(2-phosphooxyethyl)-thiazole + ADP + H(+). The protein operates within cofactor biosynthesis; thiamine diphosphate biosynthesis; 4-methyl-5-(2-phosphoethyl)-thiazole from 5-(2-hydroxyethyl)-4-methylthiazole: step 1/1. In terms of biological role, catalyzes the phosphorylation of the hydroxyl group of 4-methyl-5-beta-hydroxyethylthiazole (THZ). This chain is Hydroxyethylthiazole kinase, found in Desulfatibacillum aliphaticivorans.